The chain runs to 615 residues: Afadin- and alpha-actinin-binding protein (615 aa).

Coiled coils occupy residues 126–227 (KLGS…IAMD) and 266–293 (RQKQ…SLLS). A phosphoserine mark is found at S290, S293, S313, and S319. Residues 293–316 (SPQKKKPRERAEDGTGTVAISDIE) are disordered. The stretch at 375-461 (ISRQDHEQET…RSFTEAAIRL (87 aa)) forms a coiled coil. Residues S537, S541, and S543 each carry the phosphoserine modification. The interval 567 to 615 (PEESKPSEVARESTDQKWSVQSRPSSREGCYSGCSSAFRSAHGDRDDLP) is disordered. Basic and acidic residues predominate over residues 568 to 581 (EESKPSEVARESTD).

Belongs to the ADIP family. As to quaternary structure, interacts with SSX2 and SSX3. Does not interact with SSX1 and SSX4. Interacts with afadin and alpha-actinin. Interacts with VAV2. Interacts with PCM1. Interacts with WRAP73. Widely expressed.

It is found in the cell junction. The protein resides in the adherens junction. Its subcellular location is the nucleus. It localises to the cytoplasm. The protein localises to the cytoskeleton. It is found in the microtubule organizing center. The protein resides in the centrosome. Its subcellular location is the centriolar satellite. It localises to the cilium basal body. Its function is as follows. Belongs to an adhesion system, which plays a role in the organization of homotypic, interneuronal and heterotypic cell-cell adherens junctions (AJs). May connect the nectin-afadin and E-cadherin-catenin system through alpha-actinin and may be involved in organization of the actin cytoskeleton at AJs through afadin and alpha-actinin. Acts as a centrosome maturation factor, probably by maintaining the integrity of the pericentriolar material and proper microtubule nucleation at mitotic spindle poles. The function seems to implicate at least in part WRAP73; the SSX2IP:WRAP73 complex is proposed to act as regulator of spindle anchoring at the mitotic centrosome. Involved in cell movement: localizes at the leading edge of moving cells in response to PDGF and is required for the formation of the leading edge and the promotion of cell movement, possibly via activation of Rac signaling. Involved in ciliogenesis. It is required for targeted recruitment of the BBSome, CEP290, RAB8, and SSTR3 to the cilia. The chain is Afadin- and alpha-actinin-binding protein (Ssx2ip) from Mus musculus (Mouse).